A 474-amino-acid polypeptide reads, in one-letter code: ATP synthase subunit beta, chloroplastic (474 aa).

155–162 (GGAGVGKT) is a binding site for ATP.

This sequence belongs to the ATPase alpha/beta chains family. F-type ATPases have 2 components, CF(1) - the catalytic core - and CF(0) - the membrane proton channel. CF(1) has five subunits: alpha(3), beta(3), gamma(1), delta(1), epsilon(1). CF(0) has four main subunits: a(1), b(1), b'(1) and c(9-12).

It is found in the plastid. The protein resides in the chloroplast thylakoid membrane. It carries out the reaction ATP + H2O + 4 H(+)(in) = ADP + phosphate + 5 H(+)(out). In terms of biological role, produces ATP from ADP in the presence of a proton gradient across the membrane. The catalytic sites are hosted primarily by the beta subunits. This Thalassiosira pseudonana (Marine diatom) protein is ATP synthase subunit beta, chloroplastic.